The following is a 267-amino-acid chain: 4-hydroxy-tetrahydrodipicolinate reductase (267 aa).

Residues 8 to 13 (GAAGRM), glutamate 34, 98 to 100 (GST), and 122 to 125 (APNM) each bind NAD(+). Histidine 155 serves as the catalytic Proton donor/acceptor. A (S)-2,3,4,5-tetrahydrodipicolinate-binding site is contributed by histidine 156. The active-site Proton donor is lysine 159. 165–166 (GT) is a (S)-2,3,4,5-tetrahydrodipicolinate binding site.

It belongs to the DapB family.

It localises to the cytoplasm. It catalyses the reaction (S)-2,3,4,5-tetrahydrodipicolinate + NAD(+) + H2O = (2S,4S)-4-hydroxy-2,3,4,5-tetrahydrodipicolinate + NADH + H(+). It carries out the reaction (S)-2,3,4,5-tetrahydrodipicolinate + NADP(+) + H2O = (2S,4S)-4-hydroxy-2,3,4,5-tetrahydrodipicolinate + NADPH + H(+). It functions in the pathway amino-acid biosynthesis; L-lysine biosynthesis via DAP pathway; (S)-tetrahydrodipicolinate from L-aspartate: step 4/4. Catalyzes the conversion of 4-hydroxy-tetrahydrodipicolinate (HTPA) to tetrahydrodipicolinate. The chain is 4-hydroxy-tetrahydrodipicolinate reductase from Syntrophotalea carbinolica (strain DSM 2380 / NBRC 103641 / GraBd1) (Pelobacter carbinolicus).